The sequence spans 337 residues: MATASPAADGGRGRPWEGGLVSWPPAPPLTLPWTWMGPSWGQHPGHWGFPALTEPSASPAAGLGIFEVRRVLDASGCSMLAPLQTGAARFSSYLLSRARKVLGSHLFSPCGVPEFCSISTRKLAAHGFGASMAAMVSFPPQRYHYFLVLDFEATCDKPQIHPQEIIEFPILKLNGRTMEIESTFHMYVQPVVHPQLTPFCTELTGIIQAMVDGQPSLQQVLERVDEWMAKEGLLDPNVKSIFVTCGDWDLKVMLPGQCQYLGLPVADYFKQWINLKKAYSFAMGCWPKNGLLDMNKGLSLQHIGRPHSGIDDCKNIANIMKTLAYRGFIFKQTSKPF.

The region spanning 146-320 is the Exonuclease domain; sequence FLVLDFEATC…DDCKNIANIM (175 aa). The Mg(2+) site is built by Asp-150, Glu-152, and Asp-249. Glu-152 functions as the Proton acceptor in the catalytic mechanism. Position 152 (Glu-152) interacts with AMP. Catalysis depends on His-307, which acts as the Proton acceptor. His-307 serves as a coordination point for AMP. Asp-312 is a Mg(2+) binding site.

Interacts with PRNP. The cofactor is Mg(2+).

In Homo sapiens (Human), this protein is ERI1 exoribonuclease 3 (ERI3).